A 684-amino-acid polypeptide reads, in one-letter code: Glycine--tRNA ligase beta subunit (684 aa).

The protein belongs to the class-II aminoacyl-tRNA synthetase family. As to quaternary structure, tetramer of two alpha and two beta subunits.

The protein localises to the cytoplasm. It carries out the reaction tRNA(Gly) + glycine + ATP = glycyl-tRNA(Gly) + AMP + diphosphate. The protein is Glycine--tRNA ligase beta subunit of Pseudomonas putida (strain ATCC 47054 / DSM 6125 / CFBP 8728 / NCIMB 11950 / KT2440).